Consider the following 133-residue polypeptide: UPF0292 protein TON_0187 (133 aa).

The Toprim domain occupies 20–100 (EGAIIVEGPR…RVDSETRKEL (81 aa)). Residues Glu26, Asp69, and Asp71 each coordinate Mg(2+).

Belongs to the UPF0292 family. It depends on Mg(2+) as a cofactor.

In Thermococcus onnurineus (strain NA1), this protein is UPF0292 protein TON_0187.